A 204-amino-acid polypeptide reads, in one-letter code: Thymidylate kinase (204 aa).

Position 11 to 18 (11 to 18 (GLDKSGKT)) interacts with ATP.

Belongs to the thymidylate kinase family.

The enzyme catalyses dTMP + ATP = dTDP + ADP. It participates in pyrimidine metabolism; dTTP biosynthesis. This chain is Thymidylate kinase (TMK), found in Cowpox virus (strain GRI-90 / Grishak) (CPV).